The primary structure comprises 503 residues: MSSSPVPLLRPPVPGNRGNGPRPPKLTLGIPPSPNSRPVDGNGVGPAAAAPEAPQPQRPSTRPAPPQLRLATPMGSSSDVPQEVPRLANGRPAPPPLATTGLNESTGHSRSSSFTYLDGKASGPASASSSNYSALSFAMGLRQPHGSTPDPSSAISSVYSDREGGVQMERDNSVNGLLPDLDKLSLEKGRPLDVDDLDDEGWLAASEQKKIIELGSLGEGAGGAVTRCKLKDGKTVFALKIITTDPNPDVKKQIVRELNFNKDCASEHICRYYGAFMDKSTGTISIAMEFCEGGSLDSIYKEVKKLGGRTGEKVLGKIAEGVLNGLTYLHSRKIIHRDIKPSNILLCRNGQVKLCDFGVSGEFGTKGDANTFIGTSYYMAPERITGQSYTITSDVWSLGVTLLEVAQHRFPFPADGTEMQPRAGLIDLLTYIVRQPIPKLKDEPENRIRWSDNFKYFIECCLEKEPPRRATPWRMLEHPWMLDMKNKKVNMANFVRQVWGWQD.

The segment at 1-130 (MSSSPVPLLR…ASGPASASSS (130 aa)) is disordered. The segment covering 53–66 (APQPQRPSTRPAPP) has biased composition (pro residues). The span at 100–115 (TGLNESTGHSRSSSFT) shows a compositional bias: polar residues. The span at 121 to 130 (ASGPASASSS) shows a compositional bias: low complexity. Residues 211–481 (IIELGSLGEG…PWRMLEHPWM (271 aa)) enclose the Protein kinase domain. ATP is bound by residues 217 to 225 (LGEGAGGAV) and Lys-240. Asp-338 serves as the catalytic Proton acceptor.

It belongs to the protein kinase superfamily. STE Ser/Thr protein kinase family. MAP kinase kinase subfamily.

The enzyme catalyses L-seryl-[protein] + ATP = O-phospho-L-seryl-[protein] + ADP + H(+). It carries out the reaction L-threonyl-[protein] + ATP = O-phospho-L-threonyl-[protein] + ADP + H(+). Its function is as follows. Mitogen-activated kinase kinase (MAPKK), part of the cell wall integrity (CWI) signaling pathway composed by three protein kinases bck1, mkk2 and mpkA and responsible for the maintaining of cell-wall integrity balance. The CWI pathway also regulates the oxidative stress response, as well as the production of some secondary metabolites including pyomelanin. This is Mitogen-activated protein kinase kinae mkk2 from Aspergillus fumigatus (strain CBS 144.89 / FGSC A1163 / CEA10) (Neosartorya fumigata).